The following is a 264-amino-acid chain: tRNA pseudouridine synthase A (264 aa).

The Nucleophile role is filled by D51. Y109 provides a ligand contact to substrate.

This sequence belongs to the tRNA pseudouridine synthase TruA family. As to quaternary structure, homodimer.

The enzyme catalyses uridine(38/39/40) in tRNA = pseudouridine(38/39/40) in tRNA. Its function is as follows. Formation of pseudouridine at positions 38, 39 and 40 in the anticodon stem and loop of transfer RNAs. This chain is tRNA pseudouridine synthase A, found in Photorhabdus laumondii subsp. laumondii (strain DSM 15139 / CIP 105565 / TT01) (Photorhabdus luminescens subsp. laumondii).